The chain runs to 147 residues: UPF0306 protein YhbP (147 aa).

Belongs to the UPF0306 family.

In Escherichia coli O157:H7, this protein is UPF0306 protein YhbP.